The chain runs to 799 residues: Sodium- and chloride-dependent glycine transporter 2 (799 aa).

The disordered stretch occupies residues 1–64; it reads MDCSAPKEMN…RSASTGAQTF (64 aa). Residues 1-201 lie on the Cytoplasmic side of the membrane; the sequence is MDCSAPKEMN…ARGNWSSKLD (201 aa). Positions 40–57 are enriched in low complexity; the sequence is PAAAPAAAVQPPRVPRSA. Phosphoserine is present on Ser-58. Phosphothreonine is present on Thr-59. Residue Ser-86 is modified to Phosphoserine. Helical transmembrane passes span 202–222, 230–249, and 273–293; these read FILS…FPYL, AFLI…IFFL, and GCGI…NVII. Positions 208, 210, 211, and 215 each coordinate Na(+). Residues 294-395 are Extracellular-facing; that stretch reads CYTLFYLFAS…AGIEYPGEIR (102 aa). A disulfide bond links Cys-313 and Cys-322. 4 N-linked (GlcNAc...) asparagine glycosylation sites follow: Asn-345, Asn-355, Asn-360, and Asn-366. Transmembrane regions (helical) follow at residues 396–414, 423–440, 476–493, 505–526, and 559–578; these read WPLA…ASLA, VVYF…ILLI, IFFS…LSSY, LIVT…FSVI, and LPLS…TLGL. Positions 479, 511, 576, and 579 each coordinate Na(+). 4 consecutive transmembrane segments (helical) span residues 606–624, 640–660, 681–700, and 719–737; these read VFTL…PMIT, SYAL…VYGL, VCWA…FSFY, and LGWL…MFVI. At 738 to 799 the chain is on the cytoplasmic side; that stretch reads KMYLAPGRFI…VKDLELGTQC (62 aa).

Belongs to the sodium:neurotransmitter symporter (SNF) (TC 2.A.22) family. SLC6A5 subfamily. In terms of processing, N-glycosylated. As to expression, specifically expressed in spinal cord, brain stem, and to a lesser extent in the cerebellum.

It localises to the cell membrane. It carries out the reaction glycine(out) + chloride(out) + 3 Na(+)(out) = glycine(in) + chloride(in) + 3 Na(+)(in). In terms of biological role, sodium- and chloride-dependent glycine transporter. Terminates the action of glycine by its high affinity sodium-dependent reuptake into presynaptic terminals. May be responsible for the termination of neurotransmission at strychnine-sensitive glycinergic synapses. The protein is Sodium- and chloride-dependent glycine transporter 2 (Slc6a5) of Rattus norvegicus (Rat).